Reading from the N-terminus, the 152-residue chain is Deoxyuridine 5'-triphosphate nucleotidohydrolase (152 aa).

Residues 63 to 65 (RSG), asparagine 76, and 80 to 82 (TID) each bind substrate. The interval 129-152 (LDDTERGQGGYGSTGVSAMPPVDG) is disordered.

This sequence belongs to the dUTPase family. Mg(2+) serves as cofactor.

The enzyme catalyses dUTP + H2O = dUMP + diphosphate + H(+). Its pathway is pyrimidine metabolism; dUMP biosynthesis; dUMP from dCTP (dUTP route): step 2/2. Its function is as follows. This enzyme is involved in nucleotide metabolism: it produces dUMP, the immediate precursor of thymidine nucleotides and it decreases the intracellular concentration of dUTP so that uracil cannot be incorporated into DNA. The polypeptide is Deoxyuridine 5'-triphosphate nucleotidohydrolase (Cutibacterium acnes (strain DSM 16379 / KPA171202) (Propionibacterium acnes)).